Reading from the N-terminus, the 204-residue chain is UPF0637 protein lmo1065 (204 aa).

The protein belongs to the UPF0637 family.

The chain is UPF0637 protein lmo1065 from Listeria monocytogenes serovar 1/2a (strain ATCC BAA-679 / EGD-e).